The sequence spans 612 residues: UvrABC system protein C (612 aa).

Residues 20 to 98 form the GIY-YIG domain; it reads THSGVYRMLD…IKQHRPKYNI (79 aa). Positions 208–243 constitute a UVR domain; that stretch reads SSVLEEISANMYQASEDMEYEKAQVYRDQLVVLRKL.

Belongs to the UvrC family. As to quaternary structure, interacts with UvrB in an incision complex.

The protein localises to the cytoplasm. The UvrABC repair system catalyzes the recognition and processing of DNA lesions. UvrC both incises the 5' and 3' sides of the lesion. The N-terminal half is responsible for the 3' incision and the C-terminal half is responsible for the 5' incision. The protein is UvrABC system protein C of Francisella tularensis subsp. holarctica (strain LVS).